A 404-amino-acid chain; its full sequence is Tryptophan synthase beta chain (404 aa).

Lys99 bears the N6-(pyridoxal phosphate)lysine mark.

The protein belongs to the TrpB family. In terms of assembly, tetramer of two alpha and two beta chains. It depends on pyridoxal 5'-phosphate as a cofactor.

The catalysed reaction is (1S,2R)-1-C-(indol-3-yl)glycerol 3-phosphate + L-serine = D-glyceraldehyde 3-phosphate + L-tryptophan + H2O. The protein operates within amino-acid biosynthesis; L-tryptophan biosynthesis; L-tryptophan from chorismate: step 5/5. Functionally, the beta subunit is responsible for the synthesis of L-tryptophan from indole and L-serine. This chain is Tryptophan synthase beta chain, found in Rhizobium rhizogenes (strain K84 / ATCC BAA-868) (Agrobacterium radiobacter).